We begin with the raw amino-acid sequence, 139 residues long: Trafficking protein particle complex subunit 2-like protein (139 aa).

This sequence belongs to the TRAPP small subunits family. Sedlin subfamily. In terms of assembly, component of the multisubunit TRAPP (transport protein particle) complex, which includes at least TRAPPC2, TRAPPC2L, TRAPPC3, TRAPPC3L, TRAPPC4, TRAPPC5, TRAPPC8, TRAPPC9, TRAPPC10, TRAPPC11 and TRAPPC12. Interacts with the heterodimer TRAPPC3-TRAPPC6A.

It localises to the cytoplasm. Its subcellular location is the perinuclear region. The protein localises to the endoplasmic reticulum. It is found in the golgi apparatus. In terms of biological role, may play a role in vesicular transport from endoplasmic reticulum to Golgi. The protein is Trafficking protein particle complex subunit 2-like protein (TRAPPC2L) of Bos taurus (Bovine).